Consider the following 246-residue polypeptide: UPF0758 protein SSU98_1084 (246 aa).

The 123-residue stretch at R103–V225 folds into the MPN domain. Zn(2+) contacts are provided by H174, H176, and D187. The JAMM motif signature appears at H174–D187.

Belongs to the UPF0758 family.

This chain is UPF0758 protein SSU98_1084, found in Streptococcus suis (strain 98HAH33).